We begin with the raw amino-acid sequence, 238 residues long: Large ribosomal subunit protein uL1 (238 aa).

Residues threonine 217–alanine 238 are disordered.

It belongs to the universal ribosomal protein uL1 family. Part of the 50S ribosomal subunit.

Binds directly to 23S rRNA. The L1 stalk is quite mobile in the ribosome, and is involved in E site tRNA release. Its function is as follows. Protein L1 is also a translational repressor protein, it controls the translation of the L11 operon by binding to its mRNA. This chain is Large ribosomal subunit protein uL1, found in Corynebacterium urealyticum (strain ATCC 43042 / DSM 7109).